Reading from the N-terminus, the 398-residue chain is Putative molybdopterin biosynthesis protein MJ0666 (398 aa).

The protein belongs to the MoeA family.

It participates in cofactor biosynthesis; molybdopterin biosynthesis. The polypeptide is Putative molybdopterin biosynthesis protein MJ0666 (Methanocaldococcus jannaschii (strain ATCC 43067 / DSM 2661 / JAL-1 / JCM 10045 / NBRC 100440) (Methanococcus jannaschii)).